The following is a 465-amino-acid chain: ATP synthase subunit beta 2 (465 aa).

148–155 (GGAGVGKT) provides a ligand contact to ATP.

It belongs to the ATPase alpha/beta chains family. In terms of assembly, F-type ATPases have 2 components, CF(1) - the catalytic core - and CF(0) - the membrane proton channel. CF(1) has five subunits: alpha(3), beta(3), gamma(1), delta(1), epsilon(1). CF(0) has three main subunits: a(1), b(2) and c(9-12). The alpha and beta chains form an alternating ring which encloses part of the gamma chain. CF(1) is attached to CF(0) by a central stalk formed by the gamma and epsilon chains, while a peripheral stalk is formed by the delta and b chains.

The protein resides in the cell inner membrane. The catalysed reaction is ATP + H2O + 4 H(+)(in) = ADP + phosphate + 5 H(+)(out). Produces ATP from ADP in the presence of a proton gradient across the membrane. The catalytic sites are hosted primarily by the beta subunits. The protein is ATP synthase subunit beta 2 of Psychromonas ingrahamii (strain DSM 17664 / CCUG 51855 / 37).